We begin with the raw amino-acid sequence, 448 residues long: Rhodopsin (448 aa).

Over 2–33 (GRDLRDNETWWYNPSIVVHPHWREFDQVPDAV) the chain is Extracellular. The N-linked (GlcNAc...) asparagine glycan is linked to Asn8. The helical transmembrane segment at 34 to 58 (YYSLGIFIGICGIIGCGGNGIVIYL) threads the bilayer. The Cytoplasmic portion of the chain corresponds to 59–70 (FTKTKSLQTPAN). Residues 71-97 (MFIINLAFSDFTFSLVNGFPLMTISCF) form a helical membrane-spanning segment. The Extracellular portion of the chain corresponds to 98–109 (LKKWIFGFAACK). Cys108 and Cys186 are disulfide-bonded. A helical transmembrane segment spans residues 110-131 (VYGFIGGIFGFMSIMTMAMISI). The Cytoplasmic segment spans residues 132-151 (DRYNVIGRPMAASKKMSHRR). Residues 152–172 (AFIMIIFVWLWSVLWAIGPIF) traverse the membrane as a helical segment. At 173-199 (GWGAYTLEGVLCNCSFDYISRDSTTRS) the chain is on the extracellular side. The chain crosses the membrane as a helical span at residues 200–224 (NILCMFILGFFGPILIIFFCYFNIV). Residues 225 to 261 (MSVSNHEKEMAAMAKRLNAKELRKAQAGANAEMRLAK) are Cytoplasmic-facing. A helical membrane pass occupies residues 262–283 (ISIVIVSQFLLSWSPYAVVALL). The Extracellular segment spans residues 284 to 293 (AQFGPLEWVT). A helical transmembrane segment spans residues 294–315 (PYAAQLPVMFAKASAIHNPMIY). N6-(retinylidene)lysine is present on Lys305. The Cytoplasmic segment spans residues 316–448 (SVSHPKFREA…QGVDNQAYQA (133 aa)). Residues Cys336 and Cys337 are each lipidated (S-palmitoyl cysteine). The segment covering 343–352 (ETEDDKDAET) has biased composition (acidic residues). Positions 343-448 (ETEDDKDAET…QGVDNQAYQA (106 aa)) are disordered. The span at 359–391 (SSDAAPSADAAQMKEMMAMMQKMQQQQAAYPPQ) shows a compositional bias: low complexity. Positions 392–437 (GYAPPPQGYPPQGYPPQGYPPQGYPPQGYPPPPQGAPPQGAPPAAP) are enriched in pro residues.

The protein belongs to the G-protein coupled receptor 1 family. Opsin subfamily. Post-translationally, contains one covalently linked retinal chromophore. Upon light absorption, the covalently bound 11-cis-retinal is converted to all-trans-retinal. After hydrolysis of the Schiff base and release of the covalently bound all-trans-retinal, active rhodopsin is regenerated by binding of a fresh molecule of 11-cis-retinal. In terms of tissue distribution, retina, rhabdomere membrane of photoreceptor cells (at protein level).

It localises to the cell projection. The protein localises to the rhabdomere membrane. Functionally, photoreceptor required for image-forming vision at low light intensity. Light-induced isomerization of 11-cis to all-trans retinal triggers a conformational change that activates signaling via G-proteins. Signaling mediates the activation of phospholipase C. Subsequent receptor phosphorylation mediates displacement of the bound G-protein alpha subunit by arrestin and terminates signaling. The protein is Rhodopsin (RHO) of Todarodes pacificus (Japanese flying squid).